The following is a 721-amino-acid chain: uncharacterized protein (721 aa).

Residues 6-26 traverse the membrane as a helical segment; sequence QLIFVNFYVILIIWWFVMGIL. Residue 308 to 315 coordinates ATP; it reads GGTGSGKT.

This sequence belongs to the GSP E family. Post-translationally, this protein undergoes a protein self splicing that involves a post-translational excision of the intervening region (intein) followed by peptide ligation.

Its subcellular location is the membrane. This is an uncharacterized protein from Methanocaldococcus jannaschii (strain ATCC 43067 / DSM 2661 / JAL-1 / JCM 10045 / NBRC 100440) (Methanococcus jannaschii).